Here is an 85-residue protein sequence, read N- to C-terminus: Large ribosomal subunit protein bL27 (85 aa).

The interval M1–G22 is disordered.

Belongs to the bacterial ribosomal protein bL27 family.

This chain is Large ribosomal subunit protein bL27, found in Tolumonas auensis (strain DSM 9187 / NBRC 110442 / TA 4).